The following is a 501-amino-acid chain: ATP synthase subunit alpha (501 aa).

Residue 169 to 176 (GDRQTGKT) participates in ATP binding.

This sequence belongs to the ATPase alpha/beta chains family. In terms of assembly, F-type ATPases have 2 components, CF(1) - the catalytic core - and CF(0) - the membrane proton channel. CF(1) has five subunits: alpha(3), beta(3), gamma(1), delta(1), epsilon(1). CF(0) has three main subunits: a(1), b(2) and c(9-12). The alpha and beta chains form an alternating ring which encloses part of the gamma chain. CF(1) is attached to CF(0) by a central stalk formed by the gamma and epsilon chains, while a peripheral stalk is formed by the delta and b chains.

It localises to the cell membrane. It catalyses the reaction ATP + H2O + 4 H(+)(in) = ADP + phosphate + 5 H(+)(out). Produces ATP from ADP in the presence of a proton gradient across the membrane. The alpha chain is a regulatory subunit. The chain is ATP synthase subunit alpha from Streptococcus agalactiae serotype Ia (strain ATCC 27591 / A909 / CDC SS700).